Consider the following 704-residue polypeptide: ATP-dependent DNA helicase Hel308 (704 aa).

ATP-binding positions include Q31 and 49–56 (SPTASGKT). Residues 36-200 (RKGLLDGKRL…WLNAELVATN (165 aa)) enclose the Helicase ATP-binding domain. The short motif at 148 to 151 (DEFH) is the DEAH box element. The region spanning 235-439 (AIIAYTLDIV…AFYSFLISII (205 aa)) is the Helicase C-terminal domain. Residues 366–645 (VVGYMDLIPV…LHARVKDGVK (280 aa)) are binds Hjc. The required for helicase activity stretch occupies residues 432–644 (YSFLISIIAS…ELHARVKDGV (213 aa)). The inhibits intrinsic ATPase, and helicase stretch occupies residues 646 to 704 (PELIELVKIPGIGRVRARLLYQHDIKKPEDIVLNPEKVKQLLGPNLGEKIVREAARTIA).

Belongs to the helicase family. Hel308 subfamily. In terms of assembly, monomer; forms a 1:2 complex with Hjc, which may form a complex with Holliday junction DNA. Mg(2+) is required as a cofactor.

It catalyses the reaction Couples ATP hydrolysis with the unwinding of duplex DNA by translocating in the 3'-5' direction.. The enzyme catalyses ATP + H2O = ADP + phosphate + H(+). It carries out the reaction Couples ATP hydrolysis with the unwinding of duplex DNA at the replication fork by translocating in the 5'-3' direction. This creates two antiparallel DNA single strands (ssDNA). The leading ssDNA polymer is the template for DNA polymerase III holoenzyme which synthesizes a continuous strand.. Its activity is regulated as follows. Helicase activity is inhibited by Hjc and by PCNA123 and PCNA323. In terms of biological role, an ATP, Mg(2+)-dependent DNA 3'-5' and 5'-3' helicase that may be involved in repair of stalled replication forks. Stimulated by both ss and dsDNA. Unwinds both leading and lagging strands in replication fork structures, unlike orthologs in P.furiosus and M.thermautotrophicus which only unwind the lagging strand and only have 3'-5' helicase activity. Preferentially binds dsDNA with overhangs or branched DNA. Able to anneal DNA substrates that could form a replication fork-like structure, has replication fork reversal activity (at least in vitro). The sequence is that of ATP-dependent DNA helicase Hel308 from Sulfurisphaera tokodaii (strain DSM 16993 / JCM 10545 / NBRC 100140 / 7) (Sulfolobus tokodaii).